Consider the following 211-residue polypeptide: DNA replication complex GINS protein SLD5 (211 aa).

It belongs to the GINS4/SLD5 family. In terms of assembly, component of the GINS complex which is a heterotetramer of gins1, gins2, gins3 and gins4.

It localises to the nucleus. In terms of biological role, the GINS complex plays an essential role in the initiation of DNA replication. This is DNA replication complex GINS protein SLD5 (gins4) from Dictyostelium discoideum (Social amoeba).